The chain runs to 161 residues: Phosphopantetheine adenylyltransferase (161 aa).

Residue Thr11 participates in substrate binding. ATP-binding positions include 11 to 12 and His19; that span reads TF. Substrate is bound by residues Lys43, Thr75, and Arg89. Residues 90 to 92, Glu100, and 125 to 131 each bind ATP; these read GLR and YSFLSSS.

It belongs to the bacterial CoaD family. In terms of assembly, homohexamer. Requires Mg(2+) as cofactor.

It is found in the cytoplasm. The catalysed reaction is (R)-4'-phosphopantetheine + ATP + H(+) = 3'-dephospho-CoA + diphosphate. Its pathway is cofactor biosynthesis; coenzyme A biosynthesis; CoA from (R)-pantothenate: step 4/5. Its function is as follows. Reversibly transfers an adenylyl group from ATP to 4'-phosphopantetheine, yielding dephospho-CoA (dPCoA) and pyrophosphate. This chain is Phosphopantetheine adenylyltransferase, found in Listeria innocua serovar 6a (strain ATCC BAA-680 / CLIP 11262).